A 300-amino-acid polypeptide reads, in one-letter code: F-box protein SKIP1 (300 aa).

Residues 11 to 52 (LAPEILINIISRLTIQELWTGPMFVQKSWLTVCRDPYLWSIF) enclose the F-box; degenerate domain.

Part of a SCF (ASK-cullin-F-box) protein ligase complex. Interacts with SKP1A/ASK1 and SKP1B/ASK2.

It is found in the nucleus. The protein operates within protein modification; protein ubiquitination. In terms of biological role, component of SCF(ASK-cullin-F-box) E3 ubiquitin ligase complexes, which may mediate the ubiquitination and subsequent proteasomal degradation of target proteins. This chain is F-box protein SKIP1 (SKIP1), found in Arabidopsis thaliana (Mouse-ear cress).